The following is a 317-amino-acid chain: Putative cuticle collagen 80 (317 aa).

A disordered region spans residues 80-262 (CNCGPQASNC…GAPGNDGAPG (183 aa)). Triple-helical region stretches follow at residues 92-124 (GPPG…AGPA), 137-199 (GAPG…SGQR), and 202-264 (GLPG…PGSD). Composition is skewed to low complexity over residues 108–124 (QPGP…AGPA), 135–145 (PQGAPGPAGAP), and 175–206 (AGDA…LPGP). Pro residues-rich tracts occupy residues 207-219 (SGRP…PGAP) and 230-240 (PAGPPGPPGPN). Residues 242-262 (QPGHPGQDGQPGAPGNDGAPG) show a composition bias toward low complexity.

The protein belongs to the cuticular collagen family. Collagen polypeptide chains are complexed within the cuticle by disulfide bonds and other types of covalent cross-links.

In terms of biological role, nematode cuticles are composed largely of collagen-like proteins. The cuticle functions both as an exoskeleton and as a barrier to protect the worm from its environment. This is Putative cuticle collagen 80 (col-80) from Caenorhabditis elegans.